A 447-amino-acid chain; its full sequence is Adenylosuccinate synthetase (447 aa).

Residues 12–18 and 40–42 contribute to the GTP site; these read GDEGKGK and GHT. Aspartate 13 serves as the catalytic Proton acceptor. 2 residues coordinate Mg(2+): aspartate 13 and glycine 40. Residues 13–16, 38–41, threonine 128, arginine 142, glutamine 223, threonine 238, and arginine 302 contribute to the IMP site; these read DEGK and NAGH. The Proton donor role is filled by histidine 41. 298–304 serves as a coordination point for substrate; sequence TTTGRKR. GTP is bound by residues arginine 304, 330–332, and 412–414; these read KLD and SLG.

The protein belongs to the adenylosuccinate synthetase family. As to quaternary structure, homodimer. Mg(2+) is required as a cofactor.

The protein resides in the cytoplasm. It carries out the reaction IMP + L-aspartate + GTP = N(6)-(1,2-dicarboxyethyl)-AMP + GDP + phosphate + 2 H(+). It functions in the pathway purine metabolism; AMP biosynthesis via de novo pathway; AMP from IMP: step 1/2. Plays an important role in the de novo pathway of purine nucleotide biosynthesis. Catalyzes the first committed step in the biosynthesis of AMP from IMP. This is Adenylosuccinate synthetase from Nostoc punctiforme (strain ATCC 29133 / PCC 73102).